The following is a 152-amino-acid chain: SsrA-binding protein (152 aa).

This sequence belongs to the SmpB family.

The protein localises to the cytoplasm. Functionally, required for rescue of stalled ribosomes mediated by trans-translation. Binds to transfer-messenger RNA (tmRNA), required for stable association of tmRNA with ribosomes. tmRNA and SmpB together mimic tRNA shape, replacing the anticodon stem-loop with SmpB. tmRNA is encoded by the ssrA gene; the 2 termini fold to resemble tRNA(Ala) and it encodes a 'tag peptide', a short internal open reading frame. During trans-translation Ala-aminoacylated tmRNA acts like a tRNA, entering the A-site of stalled ribosomes, displacing the stalled mRNA. The ribosome then switches to translate the ORF on the tmRNA; the nascent peptide is terminated with the 'tag peptide' encoded by the tmRNA and targeted for degradation. The ribosome is freed to recommence translation, which seems to be the essential function of trans-translation. The polypeptide is SsrA-binding protein (Lactobacillus helveticus (strain DPC 4571)).